We begin with the raw amino-acid sequence, 376 residues long: DnaJ homolog subfamily B member 12 (376 aa).

Residue Met-1 is modified to N-acetylmethionine. The disordered stretch occupies residues 45-97 (ALIESLNQKPQSTGDHPQPTDTTHTTTKKAGGTETPSANGEAGGGESAKGYTS). Residues 57–84 (TGDHPQPTDTTHTTTKKAGGTETPSANG) show a composition bias toward low complexity. The 65-residue stretch at 111 to 175 (DYYEILGVSR…EKRKQYDQFG (65 aa)) folds into the J domain. His-186 is subject to Pros-methylhistidine. A helical membrane pass occupies residues 243 to 263 (GGLGVFVQLMPILILILVSAL).

It belongs to the DnaJ family. DNAJB12/DNAJB14 subfamily. Homodimer and homotetramer. Interacts (via J domain) with HSPA8/Hsc70. Forms a multiprotein complex, at least composed of DNAJB12, DNAJB14, HSPA8/Hsc70 and SGTA; interaction with DNAJB14 and HSPA8/Hsc70 is direct. In terms of processing, methylated at His-186 by METTL9.

The protein resides in the endoplasmic reticulum membrane. It localises to the nucleus membrane. Functionally, acts as a co-chaperone with HSPA8/Hsc70; required to promote protein folding and trafficking, prevent aggregation of client proteins, and promote unfolded proteins to endoplasmic reticulum-associated degradation (ERAD) pathway. Acts by determining HSPA8/Hsc70's ATPase and polypeptide-binding activities. Can also act independently of HSPA8/Hsc70: together with DNAJB14, acts as a chaperone that promotes maturation of potassium channels KCND2 and KCNH2 by stabilizing nascent channel subunits and assembling them into tetramers. While stabilization of nascent channel proteins is dependent on HSPA8/Hsc70, the process of oligomerization of channel subunits is independent of HSPA8/Hsc70. When overexpressed, forms membranous structures together with DNAJB14 and HSPA8/Hsc70 within the nucleus; the role of these structures, named DJANGOs, is still unclear. In Mus musculus (Mouse), this protein is DnaJ homolog subfamily B member 12.